The chain runs to 285 residues: Cytosolic Fe-S cluster assembly factor CFD1 (285 aa).

Residue 30-37 coordinates ATP; sequence GKGGVGKS. [4Fe-4S] cluster is bound by residues Cys206 and Cys209.

The protein belongs to the Mrp/NBP35 ATP-binding proteins family. NUBP2/CFD1 subfamily. In terms of assembly, heterotetramer of 2 NBP35 and 2 CFD1 chains. [4Fe-4S] cluster serves as cofactor.

It localises to the cytoplasm. Its function is as follows. Component of the cytosolic iron-sulfur (Fe/S) protein assembly (CIA) machinery. Required for maturation of extramitochondrial Fe-S proteins. The NBP35-CFD1 heterotetramer forms a Fe-S scaffold complex, mediating the de novo assembly of an Fe-S cluster and its transfer to target apoproteins. Required for biogenesis and export of both ribosomal subunits, which may reflect a role in assembly of the Fe/S clusters in RLI1, a protein which performs rRNA processing and ribosome export. This is Cytosolic Fe-S cluster assembly factor CFD1 from Candida glabrata (strain ATCC 2001 / BCRC 20586 / JCM 3761 / NBRC 0622 / NRRL Y-65 / CBS 138) (Yeast).